Consider the following 517-residue polypeptide: Serine O-succinyltransferase (517 aa).

A mitochondrion-targeting transit peptide spans 1–46 (MSPLNGVARSLPRPFQAVARRPFRVAQPAVACPSNRRSFNHSRSLR). The disordered stretch occupies residues 34–66 (SNRRSFNHSRSLRSTGSQSPAPSPRDSSNPALS). The span at 45 to 64 (LRSTGSQSPAPSPRDSSNPA) shows a compositional bias: polar residues. The 253-residue stretch at 134-386 (NVILLHTGLS…LTQQLATKKQ (253 aa)) folds into the AB hydrolase-1 domain. The interval 141–144 (GLSA) is important for substrate specificity. Residue Ser-238 is the Nucleophile of the active site. Arg-307 contacts substrate. The segment at 413-436 (QPYQEQPSASTSAEQSASASETGS) is disordered. Low complexity predominate over residues 416 to 436 (QEQPSASTSAEQSASASETGS). Active-site residues include Asp-461 and His-498. Asp-499 contributes to the substrate binding site.

Belongs to the AB hydrolase superfamily. MetX family.

The protein resides in the mitochondrion. The catalysed reaction is succinyl-CoA + L-serine = O-succinyl-L-serine + CoA. It participates in amino-acid biosynthesis; L-cysteine biosynthesis; L-cysteine from L-serine: step 1/2. Functionally, transfers a succinyl group from succinyl-CoA to L-serine, forming succinyl-L-serine. Also has weak serine acetyl transferase activity and homoserine succinyl transferase activity. This chain is Serine O-succinyltransferase, found in Emericella nidulans (Aspergillus nidulans).